A 163-amino-acid chain; its full sequence is Bacterial ISG15-like ubiquitin-like protein BilA (163 aa).

2 consecutive Ubiquitin-like BIL-type domains span residues 4–80 (LVVF…RCKR) and 81–163 (IRAT…RIEG). Residue Gly-163 forms a Glycyl lysine isopeptide (Gly-Lys) (interchain with K-? in central tail fiber acceptor protein) linkage.

In terms of biological role, component of the Bil (bacterial ISG15-like) antiviral defense system, composed of BilA, BilB, BilC and BilD. The Bil system specifically conjugates a ubiquitin-like moiety (bilA) to the bacteriophage central tail fiber (CTF, or tip attachment protein J) via reactions involving E1 (bilD) and E2 (bilB). Modifies CTF of phage SECphi27 and SECphi4, which probably interferes with assembly of the phage tail. Also modifies T5 baseplate hub protein pb3 (gene D16), but not gp27 of phage T6 (Bil defends against T6). Bil-encoding bacteria produce mostly defective phage SECphi27, many of which have phage assembly defects, including no tails. SECphi27 phage progeny produced in E.coli with the Bil system inject less DNA into naive host cells, maybe because the phage are less able to adsorb and inject their DNA into host cells. Its function is as follows. Expression of the Bil system in E.coli (strain MG1655) confers about 100-fold resistance to phage SECphi27, SECphi18, SECphi6, SECphi4 and T5, but not to SECphi17. When cells expressing the Bil system are infected by phage SECphi27 at low multiplicity of infection (0.03 MOI) the culture survives, at 3.0 MOI the culture collapses at the same time as cells without the Bil system. The protein is Bacterial ISG15-like ubiquitin-like protein BilA of Collimonas sp. (strain OK412).